The sequence spans 170 residues: ATP synthase subunit b (170 aa).

A helical membrane pass occupies residues 15–37 (LNLFETNVLNWAVVVFGLYKFLP).

The protein belongs to the ATPase B chain family. F-type ATPases have 2 components, F(1) - the catalytic core - and F(0) - the membrane proton channel. F(1) has five subunits: alpha(3), beta(3), gamma(1), delta(1), epsilon(1). F(0) has four main subunits: a(1), b(1), b'(1) and c(10-14). The alpha and beta chains form an alternating ring which encloses part of the gamma chain. F(1) is attached to F(0) by a central stalk formed by the gamma and epsilon chains, while a peripheral stalk is formed by the delta, b and b' chains.

It is found in the cellular thylakoid membrane. Its function is as follows. F(1)F(0) ATP synthase produces ATP from ADP in the presence of a proton or sodium gradient. F-type ATPases consist of two structural domains, F(1) containing the extramembraneous catalytic core and F(0) containing the membrane proton channel, linked together by a central stalk and a peripheral stalk. During catalysis, ATP synthesis in the catalytic domain of F(1) is coupled via a rotary mechanism of the central stalk subunits to proton translocation. In terms of biological role, component of the F(0) channel, it forms part of the peripheral stalk, linking F(1) to F(0). The chain is ATP synthase subunit b from Prochlorococcus marinus (strain MIT 9515).